Consider the following 567-residue polypeptide: Arginine--tRNA ligase (567 aa).

The 'HIGH' region signature appears at 121–131 (ANPNGPLHVGH).

It belongs to the class-I aminoacyl-tRNA synthetase family.

It is found in the cytoplasm. The enzyme catalyses tRNA(Arg) + L-arginine + ATP = L-arginyl-tRNA(Arg) + AMP + diphosphate. The protein is Arginine--tRNA ligase of Methanosarcina acetivorans (strain ATCC 35395 / DSM 2834 / JCM 12185 / C2A).